The primary structure comprises 549 residues: MSYTDNPPQTKRALSLDDLVNHDENEKVKLQKLSEAANGSRPFAENLESDINQTETGQAAPIDNYKESTGHGSHSQKPKSRKSSNDDEETDTDDEMGASGEINFDSEMDFDYDKQHRNLLSNGSPPMNDGSDANAKLEKPSDDSIHQNSKSDEEQRIPKQGNEGNIASNYITQVPLQKQKQTEKKIAGNAVGSVVKKEEEANAAVDNIFEEKATLQSKKNNIKRDLEVLNEISASSKPSKYRNVPIWAQKWKPTIKALQSINVKDLKIDPSFLNIIPDDDLTKSVQDWVYATIYSIAPELRSFIELEMKFGVIIDAKGPDRVNPPVSSQCVFTELDAHLTPNIDASLFKELSKYIRGISEVTENTGKFSIIESQTRDSVYRVGLSTQRPRFLRMSTDIKTGRVGQFIEKRHVAQLLLYSPKDSYDVKISLNLELPVPDNDPPEKYKSQSPISERTKDRVSYIHNDSCTRIDITKVENHNQNSKSRQSETTHEVELEINTPALLNAFDNITNDSKEYASLIRTFLNNGTIIRRKLSSLSYEIFEGSKKVM.

Residue Ser2 is modified to N-acetylserine. Ser15 is subject to Phosphoserine. The interval 30–169 (LQKLSEAANG…QGNEGNIASN (140 aa)) is disordered. Positions 86–96 (DDEETDTDDEM) are enriched in acidic residues. Ser124 carries the phosphoserine modification. The segment covering 135–157 (AKLEKPSDDSIHQNSKSDEEQRI) has biased composition (basic and acidic residues). Residue Lys223 is the N6-GMP-lysine intermediate of the active site.

This sequence belongs to the fungal TPase family. In terms of assembly, heterodimer. The mRNA-capping enzyme is composed of two separate chains alpha and beta, respectively a mRNA guanylyltransferase and an mRNA 5'-triphosphate monophosphatase. Mg(2+) is required as a cofactor.

It is found in the nucleus. The enzyme catalyses a 5'-end triphospho-ribonucleoside in mRNA + H2O = a 5'-end diphospho-ribonucleoside in mRNA + phosphate + H(+). First step of mRNA capping. Converts the 5'-triphosphate end of a nascent mRNA chain into a diphosphate end. The polypeptide is mRNA-capping enzyme subunit beta (CET1) (Saccharomyces cerevisiae (strain ATCC 204508 / S288c) (Baker's yeast)).